Reading from the N-terminus, the 406-residue chain is Cysteine desulfurase (406 aa).

An N6-(pyridoxal phosphate)lysine modification is found at Lys-226. Residue Cys-364 is the Cysteine persulfide intermediate of the active site.

This sequence belongs to the class-V pyridoxal-phosphate-dependent aminotransferase family. Csd subfamily. As to quaternary structure, homodimer. Interacts with SufE and the SufBCD complex composed of SufB, SufC and SufD. The interaction with SufE is required to mediate the direct transfer of the sulfur atom from the S-sulfanylcysteine. Requires pyridoxal 5'-phosphate as cofactor.

It is found in the cytoplasm. It catalyses the reaction (sulfur carrier)-H + L-cysteine = (sulfur carrier)-SH + L-alanine. The catalysed reaction is L-selenocysteine + AH2 = hydrogenselenide + L-alanine + A + H(+). Its pathway is cofactor biosynthesis; iron-sulfur cluster biosynthesis. Functionally, cysteine desulfurases mobilize the sulfur from L-cysteine to yield L-alanine, an essential step in sulfur metabolism for biosynthesis of a variety of sulfur-containing biomolecules. Component of the suf operon, which is activated and required under specific conditions such as oxidative stress and iron limitation. Acts as a potent selenocysteine lyase in vitro, that mobilizes selenium from L-selenocysteine. Selenocysteine lyase activity is however unsure in vivo. The polypeptide is Cysteine desulfurase (Yersinia pestis bv. Antiqua (strain Antiqua)).